The sequence spans 184 residues: Endoribonuclease YbeY (184 aa).

The Zn(2+) site is built by histidine 118, histidine 122, and histidine 128. Positions 156–184 are disordered; the sequence is YHQDRQSQKDQRLLDKSRYFDELNHGDTP. The span at 157–184 shows a compositional bias: basic and acidic residues; the sequence is HQDRQSQKDQRLLDKSRYFDELNHGDTP.

This sequence belongs to the endoribonuclease YbeY family. It depends on Zn(2+) as a cofactor.

The protein resides in the cytoplasm. Single strand-specific metallo-endoribonuclease involved in late-stage 70S ribosome quality control and in maturation of the 3' terminus of the 16S rRNA. The sequence is that of Endoribonuclease YbeY from Mycolicibacterium vanbaalenii (strain DSM 7251 / JCM 13017 / BCRC 16820 / KCTC 9966 / NRRL B-24157 / PYR-1) (Mycobacterium vanbaalenii).